The sequence spans 595 residues: Arginine--tRNA ligase (595 aa).

A 'HIGH' region motif is present at residues 132–142; the sequence is ANPTGPLHVGH.

Belongs to the class-I aminoacyl-tRNA synthetase family. In terms of assembly, monomer.

The protein localises to the cytoplasm. It carries out the reaction tRNA(Arg) + L-arginine + ATP = L-arginyl-tRNA(Arg) + AMP + diphosphate. This Cupriavidus necator (strain ATCC 17699 / DSM 428 / KCTC 22496 / NCIMB 10442 / H16 / Stanier 337) (Ralstonia eutropha) protein is Arginine--tRNA ligase.